The sequence spans 334 residues: Protein-methionine-sulfoxide reductase catalytic subunit MsrP (334 aa).

Positions 1–44 (MKKVSRLTEADVTAESAFFMQRRQVLKALGITTAALSLPTAAHA) form a signal peptide, tat-type signal. Residues Asn-88, 91 to 92 (YE), Cys-146, Thr-181, Asn-233, Arg-238, and 249 to 251 (GIK) each bind Mo-molybdopterin.

It belongs to the MsrP family. As to quaternary structure, heterodimer of a catalytic subunit (MsrP) and a heme-binding subunit (MsrQ). Mo-molybdopterin is required as a cofactor. Post-translationally, predicted to be exported by the Tat system. The position of the signal peptide cleavage has not been experimentally proven.

It localises to the periplasm. The enzyme catalyses L-methionyl-[protein] + a quinone + H2O = L-methionyl-(S)-S-oxide-[protein] + a quinol. The catalysed reaction is L-methionyl-[protein] + a quinone + H2O = L-methionyl-(R)-S-oxide-[protein] + a quinol. Part of the MsrPQ system that repairs oxidized periplasmic proteins containing methionine sulfoxide residues (Met-O), using respiratory chain electrons. Thus protects these proteins from oxidative-stress damage caused by reactive species of oxygen and chlorine generated by the host defense mechanisms. MsrPQ is essential for the maintenance of envelope integrity under bleach stress, rescuing a wide series of structurally unrelated periplasmic proteins from methionine oxidation. The catalytic subunit MsrP is non-stereospecific, being able to reduce both (R-) and (S-) diastereoisomers of methionine sulfoxide. This chain is Protein-methionine-sulfoxide reductase catalytic subunit MsrP, found in Cronobacter sakazakii (strain ATCC BAA-894) (Enterobacter sakazakii).